Consider the following 193-residue polypeptide: Crossover junction endodeoxyribonuclease RuvC (193 aa).

Residues Asp7, Glu68, and Asp141 contribute to the active site. Residues Asp7, Glu68, and Asp141 each coordinate Mg(2+). A disordered region spans residues 174-193 (RQWAQATQHATRRRGVRRGM). A compositionally biased stretch (basic residues) spans 183-193 (ATRRRGVRRGM).

This sequence belongs to the RuvC family. As to quaternary structure, homodimer which binds Holliday junction (HJ) DNA. The HJ becomes 2-fold symmetrical on binding to RuvC with unstacked arms; it has a different conformation from HJ DNA in complex with RuvA. In the full resolvosome a probable DNA-RuvA(4)-RuvB(12)-RuvC(2) complex forms which resolves the HJ. The cofactor is Mg(2+).

It localises to the cytoplasm. It carries out the reaction Endonucleolytic cleavage at a junction such as a reciprocal single-stranded crossover between two homologous DNA duplexes (Holliday junction).. Functionally, the RuvA-RuvB-RuvC complex processes Holliday junction (HJ) DNA during genetic recombination and DNA repair. Endonuclease that resolves HJ intermediates. Cleaves cruciform DNA by making single-stranded nicks across the HJ at symmetrical positions within the homologous arms, yielding a 5'-phosphate and a 3'-hydroxyl group; requires a central core of homology in the junction. The consensus cleavage sequence is 5'-(A/T)TT(C/G)-3'. Cleavage occurs on the 3'-side of the TT dinucleotide at the point of strand exchange. HJ branch migration catalyzed by RuvA-RuvB allows RuvC to scan DNA until it finds its consensus sequence, where it cleaves and resolves the cruciform DNA. The polypeptide is Crossover junction endodeoxyribonuclease RuvC (Bifidobacterium animalis subsp. lactis (strain AD011)).